A 542-amino-acid polypeptide reads, in one-letter code: Probable serine/threonine-protein kinase ndrB (542 aa).

Positions 1 to 52 are disordered; sequence MNVERKLESLSLQQQQQEEQQDESEQPNQGVEDEEEEEYDEEEYEEEEEDIN. Residues 9-18 are compositionally biased toward low complexity; it reads SLSLQQQQQE. The span at 19 to 51 shows a compositional bias: acidic residues; it reads EQQDESEQPNQGVEDEEEEEYDEEEYEEEEEDI. Residues 130 to 437 form the Protein kinase domain; the sequence is FESIRIIGRG…VEEIQSHPFF (308 aa). ATP contacts are provided by residues 136–144 and K159; that span reads IGRGAFGEV. The Proton acceptor role is filled by D258. An AGC-kinase C-terminal domain is found at 438–510; it reads KGVDWRRLRE…RNFDAMRDAF (73 aa). Residues 452-486 form a disordered region; sequence IIPQLSSPTDTSNFDHYEEEQQPEPMQPVQSKSRR. A compositionally biased stretch (polar residues) spans 455-465; that stretch reads QLSSPTDTSNF.

The protein belongs to the protein kinase superfamily. AGC Ser/Thr protein kinase family.

It is found in the cytoplasm. The enzyme catalyses L-seryl-[protein] + ATP = O-phospho-L-seryl-[protein] + ADP + H(+). It catalyses the reaction L-threonyl-[protein] + ATP = O-phospho-L-threonyl-[protein] + ADP + H(+). The sequence is that of Probable serine/threonine-protein kinase ndrB (ndrB) from Dictyostelium discoideum (Social amoeba).